A 1331-amino-acid polypeptide reads, in one-letter code: uncharacterized protein (1331 aa).

The next 8 helical transmembrane spans lie at 373-393 (VIGVGISPDFVYPVFSASLIV), 487-507 (ALFLTIAILTVAIIVSILILI), 534-554 (LLIFGLIPAIVGAISGYSFGI), 579-599 (VVGLLFFSLFVILIMSSISLL), 653-673 (LVFLTLMSSFTMMILNLSFAT), 1206-1226 (VIAVIIPIIMLIILLVSTTLI), 1255-1275 (IPLFAFGLLISIPFSIYLIAL), and 1297-1317 (AIGSMLVLLAVLSITFVLNWL).

It belongs to the ABC-4 integral membrane protein family.

The protein resides in the cell membrane. This is an uncharacterized protein from Mycoplasma genitalium (strain ATCC 33530 / DSM 19775 / NCTC 10195 / G37) (Mycoplasmoides genitalium).